Here is a 44-residue protein sequence, read N- to C-terminus: uncharacterized protein (44 aa).

It is found in the plastid. It localises to the chloroplast. This is an uncharacterized protein from Trieres chinensis (Marine centric diatom).